The chain runs to 417 residues: Acetyltransferase nanB (417 aa).

Positions methionine 1 to glycine 24 are cleaved as a signal peptide. Transmembrane regions (helical) follow at residues leucine 150–isoleucine 170, tyrosine 284–isoleucine 304, valine 307–leucine 327, valine 356–phenylalanine 376, and phenylalanine 389–leucine 409.

It belongs to the wax synthase family.

It localises to the membrane. It participates in secondary metabolite biosynthesis. Acetyltransferase; part of the gene cluster that mediates the biosynthesis of the benzazepine alkaloid nanangelenin A which contains an unprecedented 3,4-dihydro-1-benzazepine-2,5-dione-N-prenyl-N-acetoxy-anthranilamide scaffold. The first step of nanangelenin biosynthesis is catalyzed by the indoleamine 2,3-dioxygenase nanC which produces N-formyl-kynurenine through the catabolism of tryptophan. The two-module NRPS nanA then utilizes anthranilate (Ant) and L-kynurenine (L-Kyn) to assemble the dipeptide product nanangelenin B. The first adenylation domain of nanA (A1) loads anthranilate onto the T1 domain, while A2 loads kynurenine, generated through spontaneous nonenzymatic deformylation of the nanC-supplied N-formyl-kynurenine. The peptide bond formation between the tethered amino acids is catalyzed by the first condensation domain (C1) between anthranilate's carbonyl carbon and kynurenine's aliphatic primary amine. The second C domain (C2) catalyzes the final cyclization event between the aromatic amine of kynurenine and the tethered carbonyl carbon, yielding nanangelenin B. The terminal T3 domain enhances the catalytic efficiency of C2, suggesting the T2-tethered Ant-L-Kyn is transferred to T3 prior to cyclization by C2. Once released from nanA, nanangelenin B is then prenylated by the prenyltransferase nanD to form nanangelenin C. Nanangelenin C is then N-hydroxylated by the FAD-dependent monooxygenase nanF and further acetylated by the acetyltransferase nanB to yield nanangelenin F. Finally, the N-methyltransferase nanE methylates the amide nitrogen of 1-benzazepine to convert nanangelenin F into nanangelenin A. NanE is also able to methylate most of the intermediates of the pathway such as nanangelenin B and nanangelenin C to produce nanangelenin D and nanangelenin E, respectively. This Aspergillus nanangensis protein is Acetyltransferase nanB.